We begin with the raw amino-acid sequence, 416 residues long: Phosphatidylinositol 5-phosphate 4-kinase type-2 beta (416 aa).

Ser2 bears the N-acetylserine mark. Thr8 is modified (phosphothreonine). Ser19 carries the post-translational modification Phosphoserine. A PIPK domain is found at 38-415; sequence ASEPILSVLM…RFNEFMSNIL (378 aa). The segment at 64–70 is required for interaction with PIP5K1A; the sequence is VMLMPDD. Lys94 and Lys150 each carry N6-acetyllysine. ATP is bound by residues 202-204 and Lys214; that span reads RNV. Residues 203-204 and Lys214 contribute to the GTP site; that span reads NV. A Phosphothreonine modification is found at Thr322. Residue Ser326 is modified to Phosphoserine. GTP is bound at residue Asp369.

As to quaternary structure, homodimer. Binds TNFRSF1A. Interacts with PIP4K2A; the interaction suppresses ubiquitination by the SPOP/CUL3 complex. Ubiquitinated by the SPOP/CUL3 complex. Ubiquitination is stimulated by PtdIns5P levels. In terms of processing, phosphorylated on serine residues. Highly expressed in brain, heart, pancreas, skeletal muscle and kidney. Detected at lower levels in placenta, lung and liver.

It localises to the endoplasmic reticulum membrane. It is found in the cell membrane. The protein resides in the nucleus. The protein localises to the cytoplasm. It carries out the reaction a 1,2-diacyl-sn-glycero-3-phospho-(1D-myo-inositol-5-phosphate) + ATP = a 1,2-diacyl-sn-glycero-3-phospho-(1D-myo-inositol-4,5-bisphosphate) + ADP + H(+). The catalysed reaction is 1,2-dihexadecanoyl-sn-glycero-3-phospho-(1D-myo-inositol-5-phosphate) + ATP = 1,2-dihexadecanoyl-sn-glycero-3-phospho-(1D-myo-inositol-4,5-bisphosphate) + ADP + H(+). The enzyme catalyses 1,2-dihexadecanoyl-sn-glycero-3-phospho-(1D-myo-inositol-5-phosphate) + GTP = 1,2-dihexadecanoyl-sn-glycero-3-phospho-(1D-myo-inositol-4,5-bisphosphate) + GDP + H(+). In terms of biological role, participates in the biosynthesis of phosphatidylinositol 4,5-bisphosphate. Preferentially utilizes GTP, rather than ATP, for PI(5)P phosphorylation and its activity reflects changes in direct proportion to the physiological GTP concentration. Its GTP-sensing activity is critical for metabolic adaptation. PIP4Ks negatively regulate insulin signaling through a catalytic-independent mechanism. They interact with PIP5Ks and suppress PIP5K-mediated PtdIns(4,5)P2 synthesis and insulin-dependent conversion to PtdIns(3,4,5)P3. This chain is Phosphatidylinositol 5-phosphate 4-kinase type-2 beta, found in Homo sapiens (Human).